We begin with the raw amino-acid sequence, 505 residues long: Glutamate--tRNA ligase (505 aa).

The short motif at 12–22 (PSPTGDPHVGT) is the 'HIGH' region element. A 'KMSKS' region motif is present at residues 253 to 257 (KLSKR). Lys256 contacts ATP.

It belongs to the class-I aminoacyl-tRNA synthetase family. Glutamate--tRNA ligase type 1 subfamily. Monomer.

The protein localises to the cytoplasm. It carries out the reaction tRNA(Glu) + L-glutamate + ATP = L-glutamyl-tRNA(Glu) + AMP + diphosphate. Functionally, catalyzes the attachment of glutamate to tRNA(Glu) in a two-step reaction: glutamate is first activated by ATP to form Glu-AMP and then transferred to the acceptor end of tRNA(Glu). This Chlamydophila psittaci (strain ATCC VR-125 / 6BC) (Chlamydia psittaci) protein is Glutamate--tRNA ligase.